The chain runs to 152 residues: 3-dehydroquinate dehydratase (152 aa).

Tyr-23 serves as the catalytic Proton acceptor. Substrate contacts are provided by Asn-74, His-80, and Asp-87. His-100 serves as the catalytic Proton donor. Residues 101–102 and Arg-111 each bind substrate; that span reads LS.

It belongs to the type-II 3-dehydroquinase family. As to quaternary structure, homododecamer.

It carries out the reaction 3-dehydroquinate = 3-dehydroshikimate + H2O. The protein operates within metabolic intermediate biosynthesis; chorismate biosynthesis; chorismate from D-erythrose 4-phosphate and phosphoenolpyruvate: step 3/7. Its function is as follows. Catalyzes a trans-dehydration via an enolate intermediate. The protein is 3-dehydroquinate dehydratase of Clostridium botulinum (strain Langeland / NCTC 10281 / Type F).